The following is a 985-amino-acid chain: Translation initiation factor IF-2 (985 aa).

Basic and acidic residues-rich tracts occupy residues 49 to 58 (QYGKKQEKSS), 65 to 89 (IQRE…RPDN), and 99 to 113 (VPNR…DKAK). Positions 49–401 (QYGKKQEKSS…QQSAPPPILD (353 aa)) are disordered. Residues 125–136 (SKTTTNSENEQT) show a composition bias toward polar residues. Positions 137–162 (APRQGSAQQSGQGRPQANRPQGSQGR) are enriched in low complexity. Composition is skewed to gly residues over residues 180-246 (PQGG…GQGR) and 288-324 (PQGG…GAGR). Positions 349-377 (KAPDKTKGDRRKNYEKDGKWADGQIEKNK) are enriched in basic and acidic residues. Over residues 378 to 391 (LFKGRNNKNKKRQH) the composition is skewed to basic residues. The region spanning 485–654 (LRPPVVTIMG…LLVAEVHELK (170 aa)) is the tr-type G domain. A G1 region spans residues 494-501 (GHVDHGKT). 494–501 (GHVDHGKT) serves as a coordination point for GTP. The G2 stretch occupies residues 519 to 523 (GITQH). A G3 region spans residues 540 to 543 (DTPG). GTP is bound by residues 540-544 (DTPGH) and 594-597 (NKMD). The tract at residues 594–597 (NKMD) is G4. The G5 stretch occupies residues 630–632 (SAK).

This sequence belongs to the TRAFAC class translation factor GTPase superfamily. Classic translation factor GTPase family. IF-2 subfamily.

It localises to the cytoplasm. Functionally, one of the essential components for the initiation of protein synthesis. Protects formylmethionyl-tRNA from spontaneous hydrolysis and promotes its binding to the 30S ribosomal subunits. Also involved in the hydrolysis of GTP during the formation of the 70S ribosomal complex. The polypeptide is Translation initiation factor IF-2 (Desulforamulus reducens (strain ATCC BAA-1160 / DSM 100696 / MI-1) (Desulfotomaculum reducens)).